We begin with the raw amino-acid sequence, 183 residues long: ATP-dependent protease subunit HslV (183 aa).

Residue Thr9 is part of the active site. 3 residues coordinate Na(+): Ala164, Cys167, and Thr170.

This sequence belongs to the peptidase T1B family. HslV subfamily. In terms of assembly, a double ring-shaped homohexamer of HslV is capped on each side by a ring-shaped HslU homohexamer. The assembly of the HslU/HslV complex is dependent on binding of ATP.

It localises to the cytoplasm. The catalysed reaction is ATP-dependent cleavage of peptide bonds with broad specificity.. Its activity is regulated as follows. Allosterically activated by HslU binding. Its function is as follows. Protease subunit of a proteasome-like degradation complex believed to be a general protein degrading machinery. The polypeptide is ATP-dependent protease subunit HslV (Hydrogenovibrio crunogenus (strain DSM 25203 / XCL-2) (Thiomicrospira crunogena)).